A 296-amino-acid polypeptide reads, in one-letter code: 4-hydroxybenzoate octaprenyltransferase (296 aa).

9 helical membrane-spanning segments follow: residues 29-49 (IGIYLLLWPTLWALWVAAEGV), 55-75 (LFIFVFGVILMRAAGCVINDY), 102-122 (ALVLFAVLVTASFVLVLFTNA), 124-141 (TIWLSFGGLALAACYPFM), 146-166 (FYPQVVLGAAFSWGMPMAFTA), 169-189 (GSLPPEAWLLYIANLLWTVAY), 216-236 (ADRLIIASLQGLALLCLLLAG), 239-259 (FELGVWFHAGLLVAAACFVWE), and 271-291 (CFNAFLHNHWAGLAIFVGIVL).

The protein belongs to the UbiA prenyltransferase family. Mg(2+) is required as a cofactor.

Its subcellular location is the cell inner membrane. It catalyses the reaction all-trans-octaprenyl diphosphate + 4-hydroxybenzoate = 4-hydroxy-3-(all-trans-octaprenyl)benzoate + diphosphate. Its pathway is cofactor biosynthesis; ubiquinone biosynthesis. Functionally, catalyzes the prenylation of para-hydroxybenzoate (PHB) with an all-trans polyprenyl group. Mediates the second step in the final reaction sequence of ubiquinone-8 (UQ-8) biosynthesis, which is the condensation of the polyisoprenoid side chain with PHB, generating the first membrane-bound Q intermediate 3-octaprenyl-4-hydroxybenzoate. The sequence is that of 4-hydroxybenzoate octaprenyltransferase from Ectopseudomonas mendocina (strain ymp) (Pseudomonas mendocina).